Here is a 286-residue protein sequence, read N- to C-terminus: Undecaprenyl-diphosphatase (286 aa).

A run of 7 helical transmembrane segments spans residues 43-63 (FWKM…PIYF), 91-111 (LTII…KIIG), 118-138 (IIMG…DVMF), 150-170 (MSVG…VFPG), 189-209 (AAAL…ATCY), 236-256 (ITLA…VAWF), and 264-284 (GFVP…AWAL).

Belongs to the UppP family.

The protein localises to the cell inner membrane. The catalysed reaction is di-trans,octa-cis-undecaprenyl diphosphate + H2O = di-trans,octa-cis-undecaprenyl phosphate + phosphate + H(+). In terms of biological role, catalyzes the dephosphorylation of undecaprenyl diphosphate (UPP). Confers resistance to bacitracin. The protein is Undecaprenyl-diphosphatase of Koribacter versatilis (strain Ellin345).